A 209-amino-acid polypeptide reads, in one-letter code: UPF0174 protein HP_1587 (209 aa).

This sequence belongs to the UPF0174 family.

This chain is UPF0174 protein HP_1587, found in Helicobacter pylori (strain ATCC 700392 / 26695) (Campylobacter pylori).